Consider the following 282-residue polypeptide: Pantothenate synthetase (282 aa).

30–37 serves as a coordination point for ATP; that stretch reads MGALHAGH. H37 acts as the Proton donor in catalysis. A (R)-pantoate-binding site is contributed by Q61. Beta-alanine is bound at residue Q61. 147–150 provides a ligand contact to ATP; that stretch reads GEKD. Q153 provides a ligand contact to (R)-pantoate. ATP is bound by residues V176 and 184–187; that span reads LSSR.

It belongs to the pantothenate synthetase family. In terms of assembly, homodimer.

The protein localises to the cytoplasm. It catalyses the reaction (R)-pantoate + beta-alanine + ATP = (R)-pantothenate + AMP + diphosphate + H(+). The protein operates within cofactor biosynthesis; (R)-pantothenate biosynthesis; (R)-pantothenate from (R)-pantoate and beta-alanine: step 1/1. Catalyzes the condensation of pantoate with beta-alanine in an ATP-dependent reaction via a pantoyl-adenylate intermediate. This is Pantothenate synthetase from Bacteroides fragilis (strain YCH46).